The sequence spans 710 residues: METKNSEDWGKPQRKSESSSRKSNHGPAEMRPALPPENREAPETGEETQNEEPRRLIPIQRHSLFNRAVRHRHKARSTSERRASDQADLPKMGKSVNERSAFNLPQGRLSPWRTPAQRDTGAQEASESSSTPGNGTTPEECPALTDSPTTLTEALQMIHPIPADSWRNLIEQIGLLYQEYRDKSTLQEIETRRQQDAEIQGNSDGSQVGEDAGEEEEEEEEGEEEELASPPERRALPQICLLSNPHSRFNLWQDLPEIQSSGVLDILQPEEIRLQEAMFELVTSEASYYKSLNLLVSHFMENERLKKILHPSEAHILFSNVLDVMAVSERFLLELEHRMEENIVISDVCDIVYRYAADHFSVYITYVSNQTYQERTYKQLLQEKAAFRELIAQLELDPKCKGLPFSSFLILPFQRITRLKLLVQNILKRVEERSEREGTALDAHKELEMVVKACNEGVRKMSRTEQMISIQKKMEFKIKSVPIISHSRWLLKQGELQQMSGPKTSRTLRTKKLFREIYLFLFNDLLVICRQIPGDKYQVFDSAPRGLLRVEELEDQGQTLANVFILRLLENADDREATYMLKASSQSEMKRWMTSLAPNRRTKFVSFTSRLLDCPQVQCVHPYVAQQPDELTLELADILNILEKTEDGWIFGERLHDQERGWFPSSMTEEILNPKIRSQNLKECFRVHKMEDPQRSQNKDRRKLGSRNRQ.

Basic and acidic residues predominate over residues 1-20; sequence METKNSEDWGKPQRKSESSS. The tract at residues 1–146 is disordered; it reads METKNSEDWG…TPEECPALTD (146 aa). Residues 1-272 are regulatory region; modulates activity toward RHOA, RAC1 and CDC42; sequence METKNSEDWG…VLDILQPEEI (272 aa). The span at 123-137 shows a compositional bias: polar residues; it reads QEASESSSTPGNGTT. Tyrosine 177 is subject to Phosphotyrosine. The disordered stretch occupies residues 192–234; that stretch reads RRQQDAEIQGNSDGSQVGEDAGEEEEEEEEGEEEELASPPERR. Acidic residues predominate over residues 211–227; sequence DAGEEEEEEEEGEEEEL. Residues 273 to 457 form the DH domain; sequence RLQEAMFELV…EMVVKACNEG (185 aa). Residues 489-601 enclose the PH domain; that stretch reads WLLKQGELQQ…WMTSLAPNRR (113 aa). The SH3 domain maps to 612-673; the sequence is LDCPQVQCVH…PSSMTEEILN (62 aa). Residues 688–699 show a composition bias toward basic and acidic residues; that stretch reads HKMEDPQRSQNK. Residues 688–710 form a disordered region; it reads HKMEDPQRSQNKDRRKLGSRNRQ. Residues 700-710 show a composition bias toward basic residues; the sequence is DRRKLGSRNRQ.

Interacts with CDK5R1 and EPHA4; activated by EPHA4 through the CDK5 kinase. Post-translationally, src-dependent phosphorylation at Tyr-177 upon EPHA4 activation increases the guanine exchange factor activity toward RHOA. Phosphorylation by CDK5 upon EPHA4 activation by EFNA1 may regulate dendritic spine morphogenesis. Highly expressed in brain and to a lower extent in eye.

It is found in the cytoplasm. Its subcellular location is the membrane. The protein localises to the cell projection. The protein resides in the growth cone. In terms of biological role, acts as a guanine nucleotide exchange factor (GEF) which differentially activates the GTPases RHOA, RAC1 and CDC42. Plays a role in axon guidance regulating ephrin-induced growth cone collapse and dendritic spine morphogenesis. Upon activation by ephrin through EPHA4, the GEF activity switches toward RHOA resulting in its activation. Activated RHOA promotes cone retraction at the expense of RAC1- and CDC42-stimulated growth cone extension. This Mus musculus (Mouse) protein is Ephexin-1 (Ngef).